The following is a 216-amino-acid chain: MTDKRVTAILFDLDGTLIDTNELIIASYLHTLDHYCPGQFKREDVLPFIGPPLYETFSGINAEKCDEMISMYRAFNHEKHDELVTEYETVYETLDELKKAGYQLGIVTTKLRDTVNMGLKLTGIGAFFDTVVTLDDVKHPKPDPEPVRLALSRLGCDPSEAIMVGDNYHDVMAGKNAGTKTAGVAWTIKGAQTLSAYEPDYMLEKMSDLLHITGVK.

Asp12 acts as the Nucleophile in catalysis.

It belongs to the HAD-like hydrolase superfamily. PpaX family. It depends on Mg(2+) as a cofactor.

The catalysed reaction is diphosphate + H2O = 2 phosphate + H(+). Functionally, hydrolyzes pyrophosphate formed during P-Ser-HPr dephosphorylation by HPrK/P. Might play a role in controlling the intracellular pyrophosphate pool. This Bacillus velezensis (strain DSM 23117 / BGSC 10A6 / LMG 26770 / FZB42) (Bacillus amyloliquefaciens subsp. plantarum) protein is Pyrophosphatase PpaX.